The sequence spans 96 residues: DNA/RNA-binding protein Alba (96 aa).

The protein belongs to the histone-like Alba family.

It localises to the cytoplasm. The protein localises to the chromosome. Binds double-stranded DNA tightly but without sequence specificity. Involved in DNA compaction. This is DNA/RNA-binding protein Alba from Methanocella arvoryzae (strain DSM 22066 / NBRC 105507 / MRE50).